The sequence spans 90 residues: Small ribosomal subunit protein bS20 (90 aa).

This sequence belongs to the bacterial ribosomal protein bS20 family.

Functionally, binds directly to 16S ribosomal RNA. This chain is Small ribosomal subunit protein bS20, found in Rickettsia canadensis (strain McKiel).